A 264-amino-acid chain; its full sequence is Thymidylate synthase (264 aa).

Arg21 serves as a coordination point for dUMP. His51 contacts (6R)-5,10-methylene-5,6,7,8-tetrahydrofolate. Residue 126–127 coordinates dUMP; that stretch reads RR. Cys146 functions as the Nucleophile in the catalytic mechanism. Residues 166–169, Asn177, and 207–209 contribute to the dUMP site; these read RSCD and HLY. A (6R)-5,10-methylene-5,6,7,8-tetrahydrofolate-binding site is contributed by Asp169. Ala263 contacts (6R)-5,10-methylene-5,6,7,8-tetrahydrofolate.

This sequence belongs to the thymidylate synthase family. Bacterial-type ThyA subfamily. Homodimer.

Its subcellular location is the cytoplasm. It carries out the reaction dUMP + (6R)-5,10-methylene-5,6,7,8-tetrahydrofolate = 7,8-dihydrofolate + dTMP. Its pathway is pyrimidine metabolism; dTTP biosynthesis. In terms of biological role, catalyzes the reductive methylation of 2'-deoxyuridine-5'-monophosphate (dUMP) to 2'-deoxythymidine-5'-monophosphate (dTMP) while utilizing 5,10-methylenetetrahydrofolate (mTHF) as the methyl donor and reductant in the reaction, yielding dihydrofolate (DHF) as a by-product. This enzymatic reaction provides an intracellular de novo source of dTMP, an essential precursor for DNA biosynthesis. The protein is Thymidylate synthase of Baumannia cicadellinicola subsp. Homalodisca coagulata.